The chain runs to 146 residues: UPF0735 ACT domain-containing protein Teth514_2312 (146 aa).

An ACT domain is found at 71-146; sequence TLSMVLDHMP…GVRKIEILGE (76 aa).

It belongs to the UPF0735 family.

The protein is UPF0735 ACT domain-containing protein Teth514_2312 of Thermoanaerobacter sp. (strain X514).